The sequence spans 293 residues: Movement protein BC1 (293 aa).

Belongs to the begomovirus movement protein BC1 family. As to quaternary structure, binds to dimeric supercoiled plasmid DNA. In terms of processing, phosphorylated.

It localises to the host cell membrane. The protein localises to the host microsome membrane. Its subcellular location is the host endoplasmic reticulum membrane. Functionally, transports viral genome to neighboring plant cells directly through plasmosdesmata, without any budding. The movement protein allows efficient cell to cell propagation, by bypassing the host cell wall barrier. Begomovirus genome is shuttled out of nucleus by Nuclear shuttle protein (NSP) and the movement protein transports the DNA-NSP complex to cell plasmodesmata and facilitates further movement across the cell wall. The sequence is that of Movement protein BC1 from Cucurbita moschata (Winter crookneck squash).